A 949-amino-acid chain; its full sequence is Valine--tRNA ligase (949 aa).

Positions P45–H55 match the 'HIGH' region motif. The 'KMSKS' region motif lies at K561–S565. K564 provides a ligand contact to ATP. Residues E882 to P949 adopt a coiled-coil conformation.

The protein belongs to the class-I aminoacyl-tRNA synthetase family. ValS type 1 subfamily. Monomer.

The protein resides in the cytoplasm. It carries out the reaction tRNA(Val) + L-valine + ATP = L-valyl-tRNA(Val) + AMP + diphosphate. Functionally, catalyzes the attachment of valine to tRNA(Val). As ValRS can inadvertently accommodate and process structurally similar amino acids such as threonine, to avoid such errors, it has a 'posttransfer' editing activity that hydrolyzes mischarged Thr-tRNA(Val) in a tRNA-dependent manner. This Protochlamydia amoebophila (strain UWE25) protein is Valine--tRNA ligase.